The chain runs to 267 residues: tRNA (guanine-N(1)-)-methyltransferase (267 aa).

Residues G112 and 131–136 each bind S-adenosyl-L-methionine; that span reads IGDYIL. Over residues 245–259 the composition is skewed to basic and acidic residues; it reads DRRKEKNSYEDEFNR. The interval 245–267 is disordered; sequence DRRKEKNSYEDEFNRRNYKRSTS.

It belongs to the RNA methyltransferase TrmD family. In terms of assembly, homodimer.

It localises to the cytoplasm. The enzyme catalyses guanosine(37) in tRNA + S-adenosyl-L-methionine = N(1)-methylguanosine(37) in tRNA + S-adenosyl-L-homocysteine + H(+). Functionally, specifically methylates guanosine-37 in various tRNAs. This Spiroplasma kunkelii protein is tRNA (guanine-N(1)-)-methyltransferase.